The following is a 391-amino-acid chain: Ribonucleoside-diphosphate reductase small chain (391 aa).

Asp135, Glu166, and His169 together coordinate Fe cation. Residue Tyr173 is part of the active site. The Fe cation site is built by Glu229, Glu263, and His266.

It belongs to the ribonucleoside diphosphate reductase small chain family. Heterodimer of a large and a small subunit. It depends on Fe cation as a cofactor.

The protein resides in the nucleus. It localises to the cytoplasm. It catalyses the reaction a 2'-deoxyribonucleoside 5'-diphosphate + [thioredoxin]-disulfide + H2O = a ribonucleoside 5'-diphosphate + [thioredoxin]-dithiol. Provides the precursors necessary for DNA synthesis. Catalyzes the biosynthesis of deoxyribonucleotides from the corresponding ribonucleotides. This chain is Ribonucleoside-diphosphate reductase small chain (suc22), found in Schizosaccharomyces pombe (strain 972 / ATCC 24843) (Fission yeast).